An 85-amino-acid polypeptide reads, in one-letter code: Large ribosomal subunit protein bL27 (85 aa).

Positions 1–20 are disordered; sequence MAHKKAGGSTRNGRDSEAKR.

It belongs to the bacterial ribosomal protein bL27 family.

This Salmonella agona (strain SL483) protein is Large ribosomal subunit protein bL27.